A 2617-amino-acid polypeptide reads, in one-letter code: Ubiquitin carboxyl-terminal hydrolase 24 (2617 aa).

Positions 3-44 (SEEEQHMTTLLCMGFSDPATIRKALRLAKNDINEAVALLTNE) constitute a UBA domain. The tract at residues 45-99 (RPGLDYGGYEPMDSGGPSPGPGGGPRGDSGSDGSGPSRGGSTGGGGGFDPPPAYH) is disordered. Phosphoserine is present on residues Ser-62 and Ser-85. Residues 65 to 92 (PGGGPRGDSGSDGSGPSRGGSTGGGGGF) show a composition bias toward gly residues. Phosphotyrosine is present on Tyr-939. 2 disordered regions span residues 1030–1056 (KTSG…SGAF) and 1127–1148 (LLSE…QQHQ). Composition is skewed to low complexity over residues 1031–1056 (TSGS…SGAF) and 1128–1148 (LSET…QQHQ). Residues Ser-1138 and Ser-1282 each carry the phosphoserine modification. A USP domain is found at 1686–2039 (VGLRNGGATC…NAYMLFYQRV (354 aa)). The active-site Nucleophile is the Cys-1695. The disordered stretch occupies residues 1920-1942 (QDSSSEVGENGRNMDQGGGGSPR). A Phosphoserine modification is found at Ser-1940. The active-site Proton acceptor is the His-1967. Ser-2044, Ser-2074, and Ser-2558 each carry phosphoserine. The disordered stretch occupies residues 2060–2087 (AEDLSLSAPSSPEISPQSSPRPHRPNND). Residues 2066 to 2079 (SAPSSPEISPQSSP) show a composition bias toward low complexity. Thr-2562 is modified (phosphothreonine). The tract at residues 2572 to 2617 (EKEQSGSSNGSESSPANENGERHLQQGSESPMMIGELRSDLDDVDP) is disordered. Over residues 2576-2589 (SGSSNGSESSPANE) the composition is skewed to low complexity. Residue Ser-2601 is modified to Phosphoserine. Basic and acidic residues predominate over residues 2608-2617 (LRSDLDDVDP).

This sequence belongs to the peptidase C19 family.

It carries out the reaction Thiol-dependent hydrolysis of ester, thioester, amide, peptide and isopeptide bonds formed by the C-terminal Gly of ubiquitin (a 76-residue protein attached to proteins as an intracellular targeting signal).. In terms of biological role, protease that can remove conjugated ubiquitin from target proteins and polyubiquitin chains. Deubiquitinates DDB2, preventing its proteasomal degradation. This is Ubiquitin carboxyl-terminal hydrolase 24 (Usp24) from Mus musculus (Mouse).